The following is an 80-amino-acid chain: Dermaseptin-DA3 (80 aa).

The first 22 residues, 1–22, serve as a signal peptide directing secretion; it reads MAFLKKSLFLVLFLGLVSLSIC. A propeptide spanning residues 23 to 42 is cleaved from the precursor; that stretch reads EEKRENEDEEEQEDDEQSEE. Residues 24 to 48 form a disordered region; it reads EKRENEDEEEQEDDEQSEEKRGMWS. Residues 29–40 show a composition bias toward acidic residues; the sequence is EDEEEQEDDEQS. L77 carries the leucine amide modification. A propeptide spanning residues 79–80 is cleaved from the precursor; sequence EQ.

The protein belongs to the frog skin active peptide (FSAP) family. Dermaseptin subfamily. Expressed by the skin glands.

It is found in the secreted. Possesses a potent antimicrobial activity against Gram-positive and Gram-negative bacteria. Probably acts by disturbing membrane functions with its amphipathic structure. The chain is Dermaseptin-DA3 from Agalychnis dacnicolor (Giant Mexican leaf frog).